A 128-amino-acid chain; its full sequence is Fluoride-specific ion channel FluC (128 aa).

4 helical membrane-spanning segments follow: residues 5 to 25, 34 to 54, 67 to 87, and 99 to 119; these read LFIS…GLLF, FGAL…LGLF, FLIT…SEVV, and FCVL…GIWI. Na(+)-binding residues include glycine 74 and threonine 77.

The protein belongs to the fluoride channel Fluc/FEX (TC 1.A.43) family.

The protein localises to the cell inner membrane. The enzyme catalyses fluoride(in) = fluoride(out). Na(+) is not transported, but it plays an essential structural role and its presence is essential for fluoride channel function. Fluoride-specific ion channel. Important for reducing fluoride concentration in the cell, thus reducing its toxicity. This is Fluoride-specific ion channel FluC from Haemophilus influenzae (strain PittEE).